We begin with the raw amino-acid sequence, 270 residues long: Phosphatidylglycerol--prolipoprotein diacylglyceryl transferase (270 aa).

4 consecutive transmembrane segments (helical) span residues phenylalanine 19 to alanine 39, leucine 56 to glutamate 76, glutamine 92 to alanine 112, and glycine 116 to isoleucine 136. Arginine 138 lines the a 1,2-diacyl-sn-glycero-3-phospho-(1'-sn-glycerol) pocket. 3 consecutive transmembrane segments (helical) span residues histidine 178 to leucine 198, glycine 206 to leucine 226, and leucine 236 to valine 256.

It belongs to the Lgt family.

It is found in the cell membrane. The catalysed reaction is L-cysteinyl-[prolipoprotein] + a 1,2-diacyl-sn-glycero-3-phospho-(1'-sn-glycerol) = an S-1,2-diacyl-sn-glyceryl-L-cysteinyl-[prolipoprotein] + sn-glycerol 1-phosphate + H(+). The protein operates within protein modification; lipoprotein biosynthesis (diacylglyceryl transfer). In terms of biological role, catalyzes the transfer of the diacylglyceryl group from phosphatidylglycerol to the sulfhydryl group of the N-terminal cysteine of a prolipoprotein, the first step in the formation of mature lipoproteins. The protein is Phosphatidylglycerol--prolipoprotein diacylglyceryl transferase of Bacillus cereus (strain ATCC 14579 / DSM 31 / CCUG 7414 / JCM 2152 / NBRC 15305 / NCIMB 9373 / NCTC 2599 / NRRL B-3711).